A 35-amino-acid chain; its full sequence is VVXXQTLXDXRGIYGDQGSIGPXXIXGLQGDRDAD.

The segment at 1-35 (VVXXQTLXDXRGIYGDQGSIGPXXIXGLQGDRDAD) is disordered.

This chain is Unknown protein 14 from 2D-PAGE, found in Bombyx mori (Silk moth).